The primary structure comprises 154 residues: Transcriptional repressor NrdR (154 aa).

A zinc finger spans residues 3-34; the sequence is CPFCGANDTKVIDSRLVAEGEQVRRRRECVAC. Residues 49 to 139 form the ATP-cone domain; the sequence is PRLIKQDGTR…VYRRFQDLDE (91 aa).

Belongs to the NrdR family. Zn(2+) is required as a cofactor.

Its function is as follows. Negatively regulates transcription of bacterial ribonucleotide reductase nrd genes and operons by binding to NrdR-boxes. This is Transcriptional repressor NrdR from Pseudomonas putida (strain GB-1).